The following is a 176-amino-acid chain: Replication restart protein PriC (176 aa).

Belongs to the PriC family. In terms of assembly, component of the replication restart primosome, which is composed of PriA, PriB, PriC, DnaB and DnaT; DnaG primase associates transiently with this complex. Interacts with the C-terminus of SSB; this interaction is required to load the main replicative helicase onto substrate replication forks. Interacts with helicase DnaB alone and in the DnaB-DnaC complex, probably 1:1 binding with DnaB. Interacts with DnaT.

Functionally, involved in the restart of stalled replication forks, which reloads the DnaB replicative helicase on sites other than the origin of replication. Recognizes abandoned replication forks and remodels DNA single-stranded binding protein (SSB) on ssDNA to uncover a loading site for DnaB. There are several restart pathways, the PriA-PriC pathway is a minor restart pathway. Part of the minor PriC-Rep pathway for restart of stalled replication forks, which has a different substrate specificity than PriA. Part of the major restart pathway with PriA, PriB, DnaB, DnaT and DnaG primase. priB and priC have redundant roles in the cell. Binds 7-9 nucleotides of single-stranded (ss)DNA. This Klebsiella pneumoniae subsp. pneumoniae (strain ATCC 700721 / MGH 78578) protein is Replication restart protein PriC.